Reading from the N-terminus, the 554-residue chain is Valerianol synthase TPS1E (554 aa).

Mg(2+)-binding residues include D307 and D311. The DDXXD motif motif lies at 326 to 330 (VQRWD). The Mg(2+) site is built by D452, S456, and E460.

The protein belongs to the terpene synthase family. The cofactor is Mg(2+).

The enzyme catalyses (2E,6E)-farnesyl diphosphate + H2O = valerianol + diphosphate. It functions in the pathway secondary metabolite biosynthesis; terpenoid biosynthesis. Terpene synthase that catalyzes the biosynthesis of the terpene valerianol, which is a volatile compound of floral scent. The sequence is that of Valerianol synthase TPS1E from Camellia hiemalis (Camellia).